We begin with the raw amino-acid sequence, 357 residues long: Histidine biosynthesis bifunctional protein HisB (357 aa).

Residues 1-168 form a histidinol-phosphatase region; that stretch reads MTPILFIDRD…GIAHALADAP (168 aa). The active-site Nucleophile is aspartate 8. 3 residues coordinate Mg(2+): aspartate 8, aspartate 10, and aspartate 128. The Proton donor role is filled by aspartate 10. The tract at residues 169–357 is imidazoleglycerol-phosphate dehydratase; the sequence is RIAVVQRDTK…TALPTTKGAL (189 aa).

It in the N-terminal section; belongs to the histidinol-phosphatase family. In the C-terminal section; belongs to the imidazoleglycerol-phosphate dehydratase family. Mg(2+) serves as cofactor.

It localises to the cytoplasm. It carries out the reaction D-erythro-1-(imidazol-4-yl)glycerol 3-phosphate = 3-(imidazol-4-yl)-2-oxopropyl phosphate + H2O. The enzyme catalyses L-histidinol phosphate + H2O = L-histidinol + phosphate. It functions in the pathway amino-acid biosynthesis; L-histidine biosynthesis; L-histidine from 5-phospho-alpha-D-ribose 1-diphosphate: step 6/9. The protein operates within amino-acid biosynthesis; L-histidine biosynthesis; L-histidine from 5-phospho-alpha-D-ribose 1-diphosphate: step 8/9. This is Histidine biosynthesis bifunctional protein HisB from Stenotrophomonas maltophilia (strain R551-3).